Consider the following 874-residue polypeptide: Alanine--tRNA ligase (874 aa).

The Zn(2+) site is built by His564, His568, Cys665, and His669.

Belongs to the class-II aminoacyl-tRNA synthetase family. Zn(2+) serves as cofactor.

Its subcellular location is the cytoplasm. It catalyses the reaction tRNA(Ala) + L-alanine + ATP = L-alanyl-tRNA(Ala) + AMP + diphosphate. Catalyzes the attachment of alanine to tRNA(Ala) in a two-step reaction: alanine is first activated by ATP to form Ala-AMP and then transferred to the acceptor end of tRNA(Ala). Also edits incorrectly charged Ser-tRNA(Ala) and Gly-tRNA(Ala) via its editing domain. In Cupriavidus necator (strain ATCC 17699 / DSM 428 / KCTC 22496 / NCIMB 10442 / H16 / Stanier 337) (Ralstonia eutropha), this protein is Alanine--tRNA ligase.